A 352-amino-acid chain; its full sequence is C-C chemokine receptor type 5 (352 aa).

Topologically, residues 1-30 (MDYQVSSPIYDIDYGPSEPCRKIDVKQMGA) are extracellular. Position 3 is a sulfotyrosine (Tyr3). O-linked (GalNAc...) serine glycans are attached at residues Ser6 and Ser7. Residues Tyr10 and Tyr14 each carry the sulfotyrosine modification. Cystine bridges form between Cys20-Cys269 and Cys101-Cys178. The chain crosses the membrane as a helical span at residues 31–58 (QLLPPLYSLVFLFGFVGNMLVVLILINC). The Cytoplasmic portion of the chain corresponds to 59–68 (KRLKSMTDIY). The helical transmembrane segment at 69 to 89 (LLNLAISDLLFLFTIPFWAHY) threads the bilayer. Residues 90 to 102 (AAGQWDFGNTMCQ) lie on the Extracellular side of the membrane. The helical transmembrane segment at 103-124 (FLTALYFIGFFSGIFFIILLTI) threads the bilayer. At 125-141 (DRYLAIVHAVFALKART) the chain is on the cytoplasmic side. The helical transmembrane segment at 142 to 166 (VTFGVVTSVITWVVAVFASLPGIIF) threads the bilayer. Over 167–198 (TRSQKEGYHYSCSPHFPFSQYRFWKNFETLKM) the chain is Extracellular. A helical transmembrane segment spans residues 199-218 (VILGLVLPLLVMVICYSGIL). Topologically, residues 219–235 (KTLLRCRNEKKRHRAVR) are cytoplasmic. Residues 236 to 260 (LIFTIMIVYFLFWAPYNIVLLINTY) form a helical membrane-spanning segment. Over 261–277 (PDFFGVNNCNSSNRLDQ) the chain is Extracellular. A helical membrane pass occupies residues 278–301 (AMQVTETLGMTHCCVNPIIYAFVG). Residues 302 to 352 (EKFRNYLVIFFQKHIAKRFCKCCSIFQKEAPERANSVYTRSTGEQEISVGL) are Cytoplasmic-facing. S-palmitoyl cysteine attachment occurs at residues Cys321, Cys323, and Cys324. 3 positions are modified to phosphoserine; by BARK1: Ser337, Ser342, and Ser349.

Belongs to the G-protein coupled receptor 1 family. Interacts with PRAF2. Efficient ligand binding to CCL3/MIP-1alpha and CCL4/MIP-1beta requires sulfation, O-glycosylation and sialic acid modifications. Glycosylation on Ser-6 is required for efficient binding of CCL4. Interacts with GRK2. Interacts with ARRB1 and ARRB2. Interacts with CNIH4. Interacts with S100A4; this interaction stimulates T-lymphocyte chemotaxis. In terms of processing, sulfated on at least 2 of the N-terminal tyrosines. Sulfation is required for efficient binding of the chemokines, CCL3 and CCL4. Palmitoylation in the C-terminal is important for cell surface expression. Post-translationally, phosphorylation on serine residues in the C-terminal is stimulated by binding CC chemokines especially by APO-RANTES. In terms of processing, O-glycosylated, but not N-glycosylated. Ser-6 appears to be the major site even if Ser-7 may be also O-glycosylated. Also sialylated glycans present which contribute to chemokine binding. Ser-17 may also be glycosylated and, if so, with small moieties such as a T-antigen.

It is found in the cell membrane. In terms of biological role, receptor for a number of inflammatory CC-chemokines including CCL3/MIP-1-alpha, CCL4/MIP-1-beta and RANTES and subsequently transduces a signal by increasing the intracellular calcium ion level. May play a role in the control of granulocytic lineage proliferation or differentiation. Participates in T-lymphocyte migration to the infection site by acting as a chemotactic receptor. In Saimiri sciureus (Common squirrel monkey), this protein is C-C chemokine receptor type 5 (CCR5).